Reading from the N-terminus, the 328-residue chain is Fe(3+) ions import ATP-binding protein FbpC 1 (328 aa).

The ABC transporter domain maps to 7 to 237 (LVLKNITKAF…PNSLFLANFM (231 aa)). 39-46 (GPSGCGKT) serves as a coordination point for ATP.

The protein belongs to the ABC transporter superfamily. Fe(3+) ion importer (TC 3.A.1.10) family. The complex is composed of two ATP-binding proteins (FbpC), two transmembrane proteins (FbpB) and a solute-binding protein (FbpA).

The protein localises to the cell inner membrane. The catalysed reaction is Fe(3+)(out) + ATP + H2O = Fe(3+)(in) + ADP + phosphate + H(+). Functionally, part of the ABC transporter complex FbpABC involved in Fe(3+) ions import. Responsible for energy coupling to the transport system. This Haemophilus influenzae (strain ATCC 51907 / DSM 11121 / KW20 / Rd) protein is Fe(3+) ions import ATP-binding protein FbpC 1.